The chain runs to 202 residues: N-(5'-phosphoribosyl)anthranilate isomerase (202 aa).

The protein belongs to the TrpF family.

The enzyme catalyses N-(5-phospho-beta-D-ribosyl)anthranilate = 1-(2-carboxyphenylamino)-1-deoxy-D-ribulose 5-phosphate. The protein operates within amino-acid biosynthesis; L-tryptophan biosynthesis; L-tryptophan from chorismate: step 3/5. This chain is N-(5'-phosphoribosyl)anthranilate isomerase, found in Listeria monocytogenes serotype 4b (strain CLIP80459).